Here is a 356-residue protein sequence, read N- to C-terminus: tRNA N6-adenosine threonylcarbamoyltransferase (356 aa).

H114 and H118 together coordinate Fe cation. Substrate-binding positions include 136–140 (LVSGG), D169, G182, and N280. D308 provides a ligand contact to Fe cation. Residues 333-356 (ARPRWPLDNSQPALLGSGKKGAKA) form a disordered region.

The protein belongs to the KAE1 / TsaD family. Fe(2+) serves as cofactor.

The protein localises to the cytoplasm. The enzyme catalyses L-threonylcarbamoyladenylate + adenosine(37) in tRNA = N(6)-L-threonylcarbamoyladenosine(37) in tRNA + AMP + H(+). In terms of biological role, required for the formation of a threonylcarbamoyl group on adenosine at position 37 (t(6)A37) in tRNAs that read codons beginning with adenine. Is involved in the transfer of the threonylcarbamoyl moiety of threonylcarbamoyl-AMP (TC-AMP) to the N6 group of A37, together with TsaE and TsaB. TsaD likely plays a direct catalytic role in this reaction. The sequence is that of tRNA N6-adenosine threonylcarbamoyltransferase from Dinoroseobacter shibae (strain DSM 16493 / NCIMB 14021 / DFL 12).